Consider the following 465-residue polypeptide: Fujikurins efflux protein FFUJ_12242 (465 aa).

The interval 1-66 (MATNVGGAVD…AAKAHDEGPP (66 aa)) is disordered. Residues 11–28 (NSRRSISDNRHDPEKPAE) are compositionally biased toward basic and acidic residues. The next 7 helical transmembrane spans lie at 70-90 (TAAW…PGWI), 115-135 (WIPS…GIIF), 142-162 (PLII…SLAK), 175-195 (SAIG…TWFL), 200-220 (AAMG…PIMI), 231-251 (WALR…CLTV), and 274-294 (PAFA…YIPI). The N-linked (GlcNAc...) asparagine glycan is linked to Asn-310. A run of 5 helical transmembrane segments spans residues 314–334 (YLVA…GYGA), 342–362 (MFII…IPAT), 368–388 (IGYA…VGAL), 404–424 (IVFL…GAIL), and 430–450 (GWVS…AIIL).

It belongs to the major facilitator superfamily. Monocarboxylate porter (TC 2.A.1.13) family.

The protein resides in the cell membrane. Efflux pump that may be involved in the secretion of fujikurins. The polypeptide is Fujikurins efflux protein FFUJ_12242 (Gibberella fujikuroi (strain CBS 195.34 / IMI 58289 / NRRL A-6831) (Bakanae and foot rot disease fungus)).